The following is a 475-amino-acid chain: MTAPRTLYDKIWDDHVVHQSEDGTCLLYIDRHLVHEVTSPQAFEGLRMTGRKVRAPEKTIAVPDHNVPTTEGRDTKIDNEESRIQVEALDRNARDFGINYYPVSDIRQGIVHIVGPEQGWTLPGMTVVCGDSHTATHGAFGALAHGIGTSEVEHVLATQTLIQKKSKNMKVEITGSLRPGVTAKDITLSVIGLTGTAGGTGYVIEYCGQAIRELSMEGRMTVCNMAIEGGARAGLIAPDEKTFAYVMGRPHAPKGAAWEAALAYWKTLFTDKGAQFDKVVTIRGEDIAPVVTWGTSPEDVLPITATVPAPEDFTGGKVEAARRSLEYMGLTPGQKLTDIKIDTVFIGSCTNGRIEDLRAAAEILKGKKVAPGMRAMVVPGSGLVRAQAEEEGLAQIFIDAGFEWRLAGCSMCLAMNPDQLSPGERCASTSNRNFEGRQGRNGRTHLVSPGMAAAAAITGHLTDVRDLMMAPAEPA.

Positions 349, 409, and 412 each coordinate [4Fe-4S] cluster.

Belongs to the aconitase/IPM isomerase family. LeuC type 1 subfamily. Heterodimer of LeuC and LeuD. The cofactor is [4Fe-4S] cluster.

It catalyses the reaction (2R,3S)-3-isopropylmalate = (2S)-2-isopropylmalate. It functions in the pathway amino-acid biosynthesis; L-leucine biosynthesis; L-leucine from 3-methyl-2-oxobutanoate: step 2/4. Catalyzes the isomerization between 2-isopropylmalate and 3-isopropylmalate, via the formation of 2-isopropylmaleate. The sequence is that of 3-isopropylmalate dehydratase large subunit from Cereibacter sphaeroides (strain ATCC 17029 / ATH 2.4.9) (Rhodobacter sphaeroides).